Here is a 200-residue protein sequence, read N- to C-terminus: Protein GrpE (200 aa).

A compositionally biased stretch (basic and acidic residues) spans methionine 1 to asparagine 25. The tract at residues methionine 1–glutamate 52 is disordered.

The protein belongs to the GrpE family. Homodimer.

The protein resides in the cytoplasm. Participates actively in the response to hyperosmotic and heat shock by preventing the aggregation of stress-denatured proteins, in association with DnaK and GrpE. It is the nucleotide exchange factor for DnaK and may function as a thermosensor. Unfolded proteins bind initially to DnaJ; upon interaction with the DnaJ-bound protein, DnaK hydrolyzes its bound ATP, resulting in the formation of a stable complex. GrpE releases ADP from DnaK; ATP binding to DnaK triggers the release of the substrate protein, thus completing the reaction cycle. Several rounds of ATP-dependent interactions between DnaJ, DnaK and GrpE are required for fully efficient folding. The polypeptide is Protein GrpE (Legionella pneumophila subsp. pneumophila (strain Philadelphia 1 / ATCC 33152 / DSM 7513)).